The primary structure comprises 1843 residues: Zinc finger protein 142 (1843 aa).

2 consecutive C2H2-type zinc fingers follow at residues 103 to 127 (YFCE…TETH) and 164 to 186 (LPCP…FKIH). The segment at 294–357 (PAAKLPPGHR…LEGHVGSGTE (64 aa)) is disordered. The span at 318–329 (SAEEEDAEEEES) shows a compositional bias: acidic residues. Positions 330–340 (VTQKDSQKVMD) are enriched in basic and acidic residues. Serine 354 is subject to Phosphoserine. The C2H2-type 3 zinc finger occupies 363–385 (HMCPECKRCFKKRTHLVEHLHLH). The segment at 391-413 (LQCPNCQKFFTSKSKLKTHLLRE) adopts a C2H2-type 4; degenerate zinc-finger fold. 7 consecutive C2H2-type zinc fingers follow at residues 453 to 475 (YACP…LKSH), 543 to 566 (FHCP…KQGH), 601 to 623 (HQCS…MLLH), 629 to 651 (HKCE…MLTH), 657 to 679 (YMCT…MRKH), 685 to 707 (YQCN…KLRH), and 744 to 767 (YPCR…NCKH). A Glycyl lysine isopeptide (Lys-Gly) (interchain with G-Cter in SUMO2) cross-link involves residue lysine 794. Disordered regions lie at residues 819 to 888 (QCLA…LGEV) and 1103 to 1177 (PKPV…TGTS). Basic and acidic residues predominate over residues 837 to 846 (PEREDREHEI). Pro residues predominate over residues 1157–1167 (LPTPSDFPTSP). Residues 1168–1177 (PENSLPTGTS) show a composition bias toward polar residues. C2H2-type zinc fingers lie at residues 1331-1354 (LQCG…RLKH), 1388-1411 (IPCS…LRVH), 1446-1469 (FSCT…LRRH), 1514-1537 (LECG…RQHH), 1608-1630 (YKCT…SRIH), 1636-1658 (YHCH…MRIH), 1664-1686 (YLCP…MTKH), 1692-1715 (YQCP…ETRH), and 1721-1743 (FMCE…LRKH). Glycyl lysine isopeptide (Lys-Gly) (interchain with G-Cter in SUMO2) cross-links involve residues lysine 1353 and lysine 1402. Lysine 1747 participates in a covalent cross-link: Glycyl lysine isopeptide (Lys-Gly) (interchain with G-Cter in SUMO2). A C2H2-type 21 zinc finger spans residues 1749–1771 (YVCNVCHRAFRWAAGLRHHALTH). The segment at 1795 to 1843 (HVRRHHPDQADPNQGVGKDPTTPTVHLHDVKLEDPSPPAPPAPSTGPEG) is disordered. Over residues 1829–1843 (PSPPAPPAPSTGPEG) the composition is skewed to pro residues.

It belongs to the krueppel C2H2-type zinc-finger protein family.

The protein localises to the nucleus. In terms of biological role, may be involved in transcriptional regulation. The protein is Zinc finger protein 142 of Mus musculus (Mouse).